The following is a 211-amino-acid chain: Thymidylate kinase (211 aa).

11–18 serves as a coordination point for ATP; the sequence is GPDGAGKT.

Belongs to the thymidylate kinase family.

The catalysed reaction is dTMP + ATP = dTDP + ADP. In terms of biological role, phosphorylation of dTMP to form dTDP in both de novo and salvage pathways of dTTP synthesis. This is Thymidylate kinase from Streptococcus pyogenes serotype M49 (strain NZ131).